Reading from the N-terminus, the 122-residue chain is Small ribosomal subunit protein uS13 (122 aa).

The tract at residues 94–122 (GLPVRGQSTQKNARTRKGPRKTVAGKKGK) is disordered. A compositionally biased stretch (basic residues) spans 106 to 122 (ARTRKGPRKTVAGKKGK).

This sequence belongs to the universal ribosomal protein uS13 family. Part of the 30S ribosomal subunit. Forms a loose heterodimer with protein S19. Forms two bridges to the 50S subunit in the 70S ribosome.

Located at the top of the head of the 30S subunit, it contacts several helices of the 16S rRNA. In the 70S ribosome it contacts the 23S rRNA (bridge B1a) and protein L5 of the 50S subunit (bridge B1b), connecting the 2 subunits; these bridges are implicated in subunit movement. Contacts the tRNAs in the A and P-sites. The chain is Small ribosomal subunit protein uS13 from Mycoplasmopsis synoviae (strain 53) (Mycoplasma synoviae).